Here is a 349-residue protein sequence, read N- to C-terminus: Nicotinate-nucleotide--dimethylbenzimidazole phosphoribosyltransferase (349 aa).

The active-site Proton acceptor is the Glu316.

The protein belongs to the CobT family.

It catalyses the reaction 5,6-dimethylbenzimidazole + nicotinate beta-D-ribonucleotide = alpha-ribazole 5'-phosphate + nicotinate + H(+). It functions in the pathway nucleoside biosynthesis; alpha-ribazole biosynthesis; alpha-ribazole from 5,6-dimethylbenzimidazole: step 1/2. Functionally, catalyzes the synthesis of alpha-ribazole-5'-phosphate from nicotinate mononucleotide (NAMN) and 5,6-dimethylbenzimidazole (DMB). The polypeptide is Nicotinate-nucleotide--dimethylbenzimidazole phosphoribosyltransferase (Photorhabdus laumondii subsp. laumondii (strain DSM 15139 / CIP 105565 / TT01) (Photorhabdus luminescens subsp. laumondii)).